The primary structure comprises 807 residues: Mechanosensitive cation channel TMEM63A (807 aa).

Topologically, residues 1 to 51 (MMDSPFLELWQSKAVSIREQLGLGDRPNDSYCYNSAKNSTVLQGVTFGGIP) are extracellular. N-linked (GlcNAc...) asparagine glycosylation occurs at Asn38. The chain crosses the membrane as a helical span at residues 52-74 (TVLLIDVSCFLFLILVFSIIRRR). The Cytoplasmic portion of the chain corresponds to 75-134 (FWDYGRIALVSEADSESRFQRLSSTSSSGQQDFENELGCCPWLTAIFRLHDDQILEWCGE). Residues 135-167 (DAIHYLSFQRHIIFLLVVVSFLSLCVILPVNLS) form a helical membrane-spanning segment. At 168–191 (GDLLDKDPYSFGRTTIANLQTDND) the chain is on the extracellular side. The helical transmembrane segment at 192–217 (LLWLHTIFAVIYLFLTVGFMRHHTQS) threads the bilayer. The Cytoplasmic segment spans residues 218–416 (IKYKEENLVR…CWKNLSIQGL (199 aa)). Residues 219-414 (KYKEENLVRR…DICWKNLSIQ (196 aa)) form an intracellular linker IL2; confers mechanosensitivity region. The chain crosses the membrane as a helical span at residues 417 to 444 (RWWLQWLGINFTLFLGLFFLTTPSIILS). Over 445–462 (TMDKFNVTKPIHALNNPI) the chain is Extracellular. An N-linked (GlcNAc...) asparagine glycan is attached at Asn450. Residues 463–490 (ISQFFPTLLLWSFSALLPSIVYYSTLLE) form a helical membrane-spanning segment. The Cytoplasmic segment spans residues 491-495 (SHWTK). The chain crosses the membrane as a helical span at residues 496–532 (SGENQIMMTKVYIFLIFMVLILPSLGLTSLDFFFRWL). The Extracellular segment spans residues 533 to 554 (FDKTSSEASIRLECVFLPDQGA). The helical transmembrane segment at 555–586 (FFVNYVIASAFIGNGMELLRLPGLILYTFRMI) threads the bilayer. The segment at 555–586 (FFVNYVIASAFIGNGMELLRLPGLILYTFRMI) is gating helix. The Cytoplasmic portion of the chain corresponds to 587–606 (MAKTAADRRNVKQNQAFQYE). The chain crosses the membrane as a helical span at residues 607–624 (FGAMYAWMLCVFTVIVAY). Residues 625 to 628 (SITC) lie on the Extracellular side of the membrane. Residues 629–651 (PIIAPFGLIYILLKHMVDRHNLY) traverse the membrane as a helical segment. The Cytoplasmic segment spans residues 652–661 (FVYLPAKLEK). The helical transmembrane segment at 662-689 (GIHFAAVNQALAAPILCLFWLYFFSFLR) threads the bilayer. Residues 690 to 694 (LGMKA) are Extracellular-facing. The helical transmembrane segment at 695 to 709 (PATLFTFLVLLLTIL) threads the bilayer. The Cytoplasmic portion of the chain corresponds to 710 to 807 (VCLAHTCFGC…GSVAAAPQEA (98 aa)). Residue Ser739 is modified to Phosphoserine.

This sequence belongs to the CSC1 (TC 1.A.17) family. Monomer. In terms of processing, N-Glycosylated.

It is found in the lysosome membrane. The protein resides in the early endosome membrane. Its subcellular location is the cell membrane. The catalysed reaction is Ca(2+)(in) = Ca(2+)(out). Mechanosensitive cation channel with low conductance and high activation threshold. In contrast to TMEM63B, does not show phospholipid scramblase activity. Acts as a regulator of lysosomal morphology by mediating lysosomal mechanosensitivity. Important for the baby's first breath and respiration throughout life. Upon lung inflation conducts cation currents in alveolar type 1 and 2 cells triggering lamellar body exocytosis and surfactant secretion into airspace. Also acts as an osmosensitive cation channel preferentially activated by hypotonic stress. This Homo sapiens (Human) protein is Mechanosensitive cation channel TMEM63A.